The sequence spans 293 residues: 4-diphosphocytidyl-2-C-methyl-D-erythritol kinase (293 aa).

Residue lysine 16 is part of the active site. An ATP-binding site is contributed by 99–109 (PMGAGLGGGSS). Aspartate 141 is a catalytic residue.

Belongs to the GHMP kinase family. IspE subfamily.

The enzyme catalyses 4-CDP-2-C-methyl-D-erythritol + ATP = 4-CDP-2-C-methyl-D-erythritol 2-phosphate + ADP + H(+). Its pathway is isoprenoid biosynthesis; isopentenyl diphosphate biosynthesis via DXP pathway; isopentenyl diphosphate from 1-deoxy-D-xylulose 5-phosphate: step 3/6. Catalyzes the phosphorylation of the position 2 hydroxy group of 4-diphosphocytidyl-2C-methyl-D-erythritol. The sequence is that of 4-diphosphocytidyl-2-C-methyl-D-erythritol kinase from Paraburkholderia phymatum (strain DSM 17167 / CIP 108236 / LMG 21445 / STM815) (Burkholderia phymatum).